Consider the following 611-residue polypeptide: Probable inactive purple acid phosphatase 27 (611 aa).

Residues 1-18 (MARNFLLVLLWFIVQVSS) form the signal peptide. Residues Asn-263 and Asn-271 are each glycosylated (N-linked (GlcNAc...) asparagine). Asp-293 lines the Fe cation pocket. A glycan (N-linked (GlcNAc...) asparagine) is linked at Asn-314. Residues Asp-334 and Tyr-337 each coordinate Fe cation. Asp-334 lines the Zn(2+) pocket. 3 residues coordinate Zn(2+): Asn-367, His-456, and His-498. Substrate is bound at residue Asn-367. 498–500 (HVH) contributes to the substrate binding site. A Fe cation-binding site is contributed by His-500.

Belongs to the metallophosphoesterase superfamily. Purple acid phosphatase family. In terms of assembly, homodimer. Requires Fe cation as cofactor. Zn(2+) serves as cofactor. In terms of tissue distribution, expressed in roots, stems, leaves, flowers and siliques.

The protein resides in the secreted. This chain is Probable inactive purple acid phosphatase 27 (PAP27), found in Arabidopsis thaliana (Mouse-ear cress).